Here is a 413-residue protein sequence, read N- to C-terminus: 3-isopropylmalate dehydratase large subunit (413 aa).

The [4Fe-4S] cluster site is built by cysteine 295, cysteine 353, and cysteine 356.

This sequence belongs to the aconitase/IPM isomerase family. LeuC type 2 subfamily. As to quaternary structure, heterodimer of LeuC and LeuD. [4Fe-4S] cluster is required as a cofactor.

The enzyme catalyses (2R,3S)-3-isopropylmalate = (2S)-2-isopropylmalate. Its pathway is amino-acid biosynthesis; L-leucine biosynthesis; L-leucine from 3-methyl-2-oxobutanoate: step 2/4. In terms of biological role, catalyzes the isomerization between 2-isopropylmalate and 3-isopropylmalate, via the formation of 2-isopropylmaleate. The polypeptide is 3-isopropylmalate dehydratase large subunit (Pyrobaculum calidifontis (strain DSM 21063 / JCM 11548 / VA1)).